Here is a 145-residue protein sequence, read N- to C-terminus: Lysozyme C (145 aa).

Positions 1-19 (MLFFGFLLAFLSAVPGTEG) are cleaved as a signal peptide. One can recognise a C-type lysozyme domain in the interval 20–145 (EIIPRCELVK…RDLSSYVKGC (126 aa)). Cystine bridges form between Cys-25–Cys-145, Cys-49–Cys-133, Cys-82–Cys-98, and Cys-94–Cys-112. Catalysis depends on residues Glu-54 and Asp-70.

Belongs to the glycosyl hydrolase 22 family. Monomer.

It is found in the secreted. The enzyme catalyses Hydrolysis of (1-&gt;4)-beta-linkages between N-acetylmuramic acid and N-acetyl-D-glucosamine residues in a peptidoglycan and between N-acetyl-D-glucosamine residues in chitodextrins.. In terms of biological role, lysozymes have primarily a bacteriolytic function; those in tissues and body fluids are associated with the monocyte-macrophage system and enhance the activity of immunoagents. The polypeptide is Lysozyme C (LYZ) (Opisthocomus hoazin (Hoatzin)).